A 215-amino-acid polypeptide reads, in one-letter code: LexA repressor (215 aa).

The H-T-H motif DNA-binding region spans 28–48 (RAEIAAELGFSSPNAAEEHLR). Catalysis depends on for autocatalytic cleavage activity residues Ser133 and Lys170.

This sequence belongs to the peptidase S24 family. In terms of assembly, homodimer.

It catalyses the reaction Hydrolysis of Ala-|-Gly bond in repressor LexA.. Its function is as follows. Represses a number of genes involved in the response to DNA damage (SOS response), including recA and lexA. In the presence of single-stranded DNA, RecA interacts with LexA causing an autocatalytic cleavage which disrupts the DNA-binding part of LexA, leading to derepression of the SOS regulon and eventually DNA repair. In Burkholderia thailandensis (strain ATCC 700388 / DSM 13276 / CCUG 48851 / CIP 106301 / E264), this protein is LexA repressor.